The chain runs to 217 residues: MNLVLMGLPGAGKGTQAEKIVAAYGIPHISTGDMFRAAMKEGTPLGLQAKQYMDRGDLVPDEVTIGIVRERLSKDDCQNGFLLDGFPRTVAQAEALETMLADIGRKLDYVIHIDVRQDVLMERLTGRRICRNCGATYHLIFHPPAKPGVCDKCGGELYQRADDNEATVANRLEVNMKQMKPLVDFYEQKGYLRNINGEQDMEKVFADIRELLGGLAR.

10–15 (GAGKGT) contributes to the ATP binding site. Residues 30–59 (STGDMFRAAMKEGTPLGLQAKQYMDRGDLV) form an NMP region. Residues threonine 31, arginine 36, 57–59 (DLV), 85–88 (GFPR), and glutamine 92 each bind AMP. An LID region spans residues 126–163 (GRRICRNCGATYHLIFHPPAKPGVCDKCGGELYQRADD). Position 127 (arginine 127) interacts with ATP. Zn(2+) is bound by residues cysteine 130 and cysteine 133. Position 136 to 137 (136 to 137 (TY)) interacts with ATP. The Zn(2+) site is built by cysteine 150 and cysteine 153. AMP is bound by residues arginine 160 and arginine 171. Residue glutamine 199 participates in ATP binding.

The protein belongs to the adenylate kinase family. In terms of assembly, monomer.

The protein localises to the cytoplasm. The enzyme catalyses AMP + ATP = 2 ADP. It functions in the pathway purine metabolism; AMP biosynthesis via salvage pathway; AMP from ADP: step 1/1. In terms of biological role, catalyzes the reversible transfer of the terminal phosphate group between ATP and AMP. Plays an important role in cellular energy homeostasis and in adenine nucleotide metabolism. The polypeptide is Adenylate kinase (Geobacillus stearothermophilus (Bacillus stearothermophilus)).